The sequence spans 294 residues: Phosphoribosylaminoimidazole-succinocarboxamide synthase (294 aa).

This sequence belongs to the SAICAR synthetase family.

The enzyme catalyses 5-amino-1-(5-phospho-D-ribosyl)imidazole-4-carboxylate + L-aspartate + ATP = (2S)-2-[5-amino-1-(5-phospho-beta-D-ribosyl)imidazole-4-carboxamido]succinate + ADP + phosphate + 2 H(+). It participates in purine metabolism; IMP biosynthesis via de novo pathway; 5-amino-1-(5-phospho-D-ribosyl)imidazole-4-carboxamide from 5-amino-1-(5-phospho-D-ribosyl)imidazole-4-carboxylate: step 1/2. This is Phosphoribosylaminoimidazole-succinocarboxamide synthase from Thermoplasma acidophilum (strain ATCC 25905 / DSM 1728 / JCM 9062 / NBRC 15155 / AMRC-C165).